A 96-amino-acid chain; its full sequence is Large ribosomal subunit protein eL43 (96 aa).

A C4-type zinc finger spans residues 41–62 (CPVCAFPKLKRAGTSIWVCEKC).

This sequence belongs to the eukaryotic ribosomal protein eL43 family. It depends on Zn(2+) as a cofactor.

The chain is Large ribosomal subunit protein eL43 from Methanococcus maripaludis (strain C5 / ATCC BAA-1333).